The following is a 183-amino-acid chain: ATP synthase subunit b, chloroplastic (183 aa).

Residues 27–49 form a helical membrane-spanning segment; sequence LATNLINLTVVVGVLIFFGKGVL.

This sequence belongs to the ATPase B chain family. As to quaternary structure, F-type ATPases have 2 components, F(1) - the catalytic core - and F(0) - the membrane proton channel. F(1) has five subunits: alpha(3), beta(3), gamma(1), delta(1), epsilon(1). F(0) has four main subunits: a(1), b(1), b'(1) and c(10-14). The alpha and beta chains form an alternating ring which encloses part of the gamma chain. F(1) is attached to F(0) by a central stalk formed by the gamma and epsilon chains, while a peripheral stalk is formed by the delta, b and b' chains.

It localises to the plastid. It is found in the chloroplast thylakoid membrane. Functionally, f(1)F(0) ATP synthase produces ATP from ADP in the presence of a proton or sodium gradient. F-type ATPases consist of two structural domains, F(1) containing the extramembraneous catalytic core and F(0) containing the membrane proton channel, linked together by a central stalk and a peripheral stalk. During catalysis, ATP synthesis in the catalytic domain of F(1) is coupled via a rotary mechanism of the central stalk subunits to proton translocation. In terms of biological role, component of the F(0) channel, it forms part of the peripheral stalk, linking F(1) to F(0). This Lolium perenne (Perennial ryegrass) protein is ATP synthase subunit b, chloroplastic.